The sequence spans 95 residues: Antitoxin VapB41 (95 aa).

Antitoxin component of a type II toxin-antitoxin (TA) system. The chain is Antitoxin VapB41 (vapB41) from Mycobacterium tuberculosis (strain CDC 1551 / Oshkosh).